A 288-amino-acid chain; its full sequence is Disulfide-bond oxidoreductase YghU (288 aa).

Residues Asn26, 52–54 (TPN), Gln87, Ile101, 117–118 (ES), Gln151, and Arg178 contribute to the glutathione site. The 88-residue stretch at 46-133 (QLYSLGTPNG…YLAEKFGYFL (88 aa)) folds into the GST N-terminal domain. Residues 139 to 265 (KRTETMNWLF…RIVNRTNGPL (127 aa)) form the GST C-terminal domain. The tract at residues 260–288 (RTNGPLNEQLHERHDASDFETNTEDKRQG) is disordered. A compositionally biased stretch (basic and acidic residues) spans 268–288 (QLHERHDASDFETNTEDKRQG).

It belongs to the GST superfamily. Nu-class GSH transferase family. As to quaternary structure, homodimer.

Exhibits a robust glutathione (GSH)-dependent disulfide-bond reductase activity toward the model substrate, 2-hydroxyethyl disulfide; the actual physiological substrates are not known. Also displays a modest GSH-dependent peroxidase activity toward several organic hydroperoxides, such as cumene hydroperoxide and linoleic acid 13(S)-hydroperoxide, but does not reduce H(2)O(2) or tert-butyl hydroperoxide at appreciable rates. Exhibits little or no GSH transferase activity with most typical electrophilic substrates, and has no detectable transferase activity toward 1-chloro-2,4-dinitrobenzene (CDNB) with glutathionylspermidine (GspSH) as the nucleophilic substrate. In Escherichia coli (strain K12), this protein is Disulfide-bond oxidoreductase YghU (yghU).